The chain runs to 390 residues: uncharacterized protein (390 aa).

This is an uncharacterized protein from Orgyia pseudotsugata multicapsid polyhedrosis virus (OpMNPV).